The sequence spans 221 residues: Serine/arginine-rich splicing factor 2 (221 aa).

At serine 2 the chain carries N-acetylserine. Serine 2 bears the Phosphoserine mark. An RRM domain is found at 14–92 (TSLKVDNLTY…RELRVQMARY (79 aa)). Threonine 22 and threonine 25 each carry phosphothreonine. Residue serine 26 is modified to Phosphoserine. Residue lysine 52 is modified to N6-acetyllysine. Positions 92–221 (YGRPPDSHHS…SPEEEGAVSS (130 aa)) are disordered. Basic residues-rich tracts occupy residues 117 to 171 (RRSR…RSKS) and 179 to 189 (SRSRSRSRSRS). Residues serine 189, serine 191, serine 204, serine 206, serine 208, serine 212, and serine 220 each carry the phosphoserine modification. The segment covering 212 to 221 (SPEEEGAVSS) has biased composition (acidic residues).

The protein belongs to the splicing factor SR family. In vitro, self-associates and binds SRSF1/SFRS1 (ASF/SF2), SNRP70 and U2AF1 but not U2AF2. Binds SREK1/SFRS12. Interacts with CCNL1 and CCNL2. Interacts with SCAF11. Interacts with ZRSR2/U2AF1-RS2. Interacts with CCDC55 (via C-terminus). Interacts with BRDT. Extensively phosphorylated on serine residues in the RS domain. Phosphorylated by SRPK2 and this causes its redistribution from the nuclear speckle to nucleoplasm and controls cell fate decision in response to cisplatin treatment. KAT5/TIP60 inhibits its phosphorylation by preventing SRPK2 nuclear translocation. Post-translationally, acetylation on Lys-52 by KAT5/TIP60 promotes its proteasomal degradation. This effect is counterbalanced by HDAC6, which positively controls SRSF2 protein level by deacetylating it and preventing its proteasomal degradation.

Its subcellular location is the nucleus. The protein localises to the nucleoplasm. It is found in the nucleus speckle. In terms of biological role, necessary for the splicing of pre-mRNA. It is required for formation of the earliest ATP-dependent splicing complex and interacts with spliceosomal components bound to both the 5'- and 3'-splice sites during spliceosome assembly. It also is required for ATP-dependent interactions of both U1 and U2 snRNPs with pre-mRNA. Interacts with other spliceosomal components, via the RS domains, to form a bridge between the 5'- and 3'-splice site binding components, U1 snRNP and U2AF. Binds to purine-rich RNA sequences, either 5'-AGSAGAGTA-3' (S=C or G) or 5'-GTTCGAGTA-3'. Can bind to beta-globin mRNA and commit it to the splicing pathway. The phosphorylated form (by SRPK2) is required for cellular apoptosis in response to cisplatin treatment. This chain is Serine/arginine-rich splicing factor 2 (SRSF2), found in Pan troglodytes (Chimpanzee).